A 776-amino-acid polypeptide reads, in one-letter code: Microtubule-associated protein tau (776 aa).

Residues 1-26 (MAEPRQEFEVMEDHAGTYGLGDRKDQ) are compositionally biased toward basic and acidic residues. Disordered regions lie at residues 1–263 (MAEP…PAKG) and 276–591 (STEI…LKNV). Ala-2 is subject to N-acetylalanine. Phosphotyrosine is present on residues Tyr-18 and Tyr-29. Residue Lys-44 forms a Glycyl lysine isopeptide (Lys-Gly) (interchain with G-Cter in ubiquitin) linkage. 2 positions are modified to phosphoserine: Ser-46 and Ser-61. Over residues 61-71 (SETSDAKSTPT) the composition is skewed to polar residues. Phosphothreonine is present on residues Thr-69, Thr-71, and Thr-111. Composition is skewed to basic and acidic residues over residues 179-189 (EGGRHAPELLK) and 207-216 (GGKERPGSKE). Ser-214 carries the phosphoserine modification. Positions 217-228 (EVDEDRDVDESS) are enriched in acidic residues. Basic and acidic residues predominate over residues 314–323 (EQAHSEEHLG). Low complexity predominate over residues 324-340 (RAAFPGAPGEGPEARGP). Basic and acidic residues-rich tracts occupy residues 344–356 (EDTK…ESSE) and 381–393 (KSKD…DKKA). Residues 440-452 (KYVSSVTPRTGSS) show a composition bias toward polar residues. The span at 455-466 (KEMKLKGADGKT) shows a compositional bias: basic and acidic residues. Position 470 is a phosphothreonine (Thr-470). Arg-472 carries the omega-N-methylarginine modification. Position 480 is an N6,N6-dimethyllysine; alternate (Lys-480). Position 480 is an N6-acetyllysine; alternate (Lys-480). Phosphothreonine occurs at positions 486, 492, and 498. Residues Ser-502, Ser-526, and Ser-530 each carry the phosphoserine modification. Residues 517-528 (RSERGEPPKSGD) show a composition bias toward basic and acidic residues. Low complexity predominate over residues 529-549 (RSGYSSPGSPGTPGSRSRTPS). At Tyr-532 the chain carries Phosphotyrosine. A phosphoserine mark is found at Ser-533, Ser-534, and Ser-537. Phosphothreonine is present on residues Thr-540 and Thr-547. Ser-549 is modified (phosphoserine). Phosphothreonine is present on Thr-552. Lys-560 bears the N6-acetyllysine mark. A Phosphothreonine modification is found at Thr-566. Residues Ser-570 and Ser-572 each carry the phosphoserine modification. 4 Tau/MAP repeats span residues 579 to 609 (QTAP…GGGK), 610 to 640 (VQII…GGGS), 641 to 671 (VQIV…GGGQ), and 672 to 703 (VEVK…GGGN). Residue Lys-589 forms a Glycyl lysine isopeptide (Lys-Gly) (interchain with G-Cter in ubiquitin) linkage. At Lys-594 the chain carries N6-acetyllysine; alternate. The residue at position 594 (Lys-594) is an N6-methyllysine; alternate. A Glycyl lysine isopeptide (Lys-Gly) (interchain with G-Cter in ubiquitin); alternate cross-link involves residue Lys-594. Ser-597 carries the post-translational modification Phosphoserine. Lys-602 participates in a covalent cross-link: Glycyl lysine isopeptide (Lys-Gly) (interchain with G-Cter in ubiquitin). Lys-616 is modified (N6-acetyllysine; alternate). A Glycyl lysine isopeptide (Lys-Gly) (interchain with G-Cter in ubiquitin); alternate cross-link involves residue Lys-616. A phosphoserine mark is found at Ser-620 and Ser-624. Position 625 is an N6-acetyllysine (Lys-625). Residue Ser-628 is modified to Phosphoserine. N6-acetyllysine; alternate is present on Lys-633. Lys-633 is covalently cross-linked (Glycyl lysine isopeptide (Lys-Gly) (interchain with G-Cter in ubiquitin); alternate). Ser-640 carries the post-translational modification Phosphoserine. Lys-646 bears the N6,N6-dimethyllysine; alternate mark. 3 positions are modified to N6-acetyllysine; alternate: Lys-646, Lys-652, and Lys-656. Glycyl lysine isopeptide (Lys-Gly) (interchain with G-Cter in ubiquitin); alternate cross-links involve residues Lys-646, Lys-652, and Lys-656. Ser-659 is subject to Phosphoserine. An N6-acetyllysine; alternate mark is found at Lys-666, Lys-678, and Lys-682. Residues Lys-666, Lys-678, and Lys-682 each participate in a glycyl lysine isopeptide (Lys-Gly) (interchain with G-Cter in ubiquitin); alternate cross-link. Omega-N-methylarginine is present on Arg-684. At Ser-687 the chain carries Phosphoserine. Residue Lys-688 forms a Glycyl lysine isopeptide (Lys-Gly) (interchain with G-Cter in ubiquitin) linkage. Residue Ser-691 is modified to Phosphoserine. N6-acetyllysine; alternate is present on Lys-704. A Glycyl lysine isopeptide (Lys-Gly) (interchain with G-Cter in ubiquitin); alternate cross-link involves residue Lys-704. Lys-710 participates in a covalent cross-link: Glycyl lysine isopeptide (Lys-Gly) (interchain with G-Cter in ubiquitin). Lys-720 bears the N6-acetyllysine; alternate mark. Lys-720 is covalently cross-linked (Glycyl lysine isopeptide (Lys-Gly) (interchain with G-Cter in ubiquitin); alternate). Tyr-729 carries the phosphotyrosine modification. Phosphoserine is present on residues Ser-731 and Ser-735. A disordered region spans residues 733-752 (VVSGDTSPRHLSNVSSTGSI). The segment covering 736–751 (GDTSPRHLSNVSSTGS) has biased composition (polar residues). Position 738 is a phosphothreonine (Thr-738). Residues Ser-739, Ser-744, Ser-751, and Ser-757 each carry the phosphoserine modification. Thr-762 carries the phosphothreonine modification.

In terms of assembly, interacts with MARK1, MARK2, MARK3 and MARK4. Interacts with SQSTM1 when polyubiquitinated. Interacts with PSMC2 through SQSTM1. Interacts with FKBP4. Binds to CSNK1D. Interacts with SGK1. Interacts with EPM2A; the interaction dephosphorylates MAPT at Ser-396. Interacts with PIN1. Interacts with LRRK2. Interacts with LRP1, leading to endocytosis; this interaction is reduced in the presence of LRPAP1/RAP. In terms of processing, polyubiquitinated. Requires functional TRAF6 and may provoke SQSTM1-dependent degradation by the proteasome. Post-translationally, phosphorylation at various serine and threonine residues in S-P or T-P motifs by proline-directed protein kinases (PDPK1, CDK1, CDK5, GSK3, MAPK) (a few sites per protein in interphase, more in mitosis), and at serine residues in K-X-G-S motifs by MAP/microtubule affinity-regulating kinase (MARK1, MARK2, MARK3 or MARK4), causing detachment from microtubules, and their disassembly. Phosphorylation at Ser-597 by BRSK1 and BRSK2 in neurons affects ability to bind microtubules and plays a role in neuron polarization. Phosphorylation at Ser-214 by SGK1 mediates microtubule depolymerization and neurite formation in hippocampal neurons. Phosphorylated by PHK. Dephosphorylation at several serine and threonine residues by the serine/threonine phosphatase PPP5C.

The protein resides in the cytoplasm. It localises to the cytosol. It is found in the cell membrane. Its subcellular location is the cytoskeleton. The protein localises to the cell projection. The protein resides in the axon. It localises to the dendrite. Promotes microtubule assembly and stability, and might be involved in the establishment and maintenance of neuronal polarity. The C-terminus binds axonal microtubules while the N-terminus binds neural plasma membrane components, suggesting that tau functions as a linker protein between both. Axonal polarity is predetermined by tau localization (in the neuronal cell) in the domain of the cell body defined by the centrosome. The short isoforms allow plasticity of the cytoskeleton whereas the longer isoforms may preferentially play a role in its stabilization. The protein is Microtubule-associated protein tau (MAPT) of Gorilla gorilla gorilla (Western lowland gorilla).